The following is a 67-amino-acid chain: Protein AaeX (67 aa).

The next 2 helical transmembrane spans lie at 8-28 (VLFG…LPLF) and 47-67 (PALF…WLFI).

It belongs to the AaeX family.

It localises to the cell membrane. The chain is Protein AaeX from Edwardsiella piscicida.